Consider the following 690-residue polypeptide: Protein-glutamine gamma-glutamyltransferase 2 (690 aa).

A2 carries the post-translational modification N-acetylalanine. Disulfide bonds link C230–C370 and C370–C371. Active-site residues include C277, H335, and D358. Positions 398, 400, 436, 446, and 451 each coordinate Ca(2+). Position 467 is an N6-acetyllysine (K467). Residue 479–486 (RIRVGQNM) participates in GTP binding. Residue E542 coordinates Ca(2+). 583–586 (RDIY) contacts GTP. Q636 participates in a covalent cross-link: Isoglutamyl lysine isopeptide (Gln-Lys) (interchain with K-?).

Belongs to the transglutaminase superfamily. Transglutaminase family. Monomer. Interacts with phospholipase C; promoting alpha-1 adrenergic receptor signaling. Interacts with PLCD1. The cofactor is Ca(2+). In terms of processing, disulfide bond formation inactivates the calcium-dependent acyltransferase activity. Cys-370 can form disulfide bonds with both Cys-230 and Cys-371: formation of a disulfide bond between Cys-230 and Cys-370 facilitates formation of the disulfide between Cys-370 and Cys-371, which promotes inactivation of the acyltransferase activity. May also form interchain disulfids between Cys-230 and Cys-370. Ca(2+) protects against disulfide bond formation and inactivation. Post-translationally, auto-transglutaminated: Forms covalent cross-links mediated by transglutaminase between Gln-636 and the epsilon-amino group of a lysine residue of itself or HMGB1, forming homopolymers and heteropolymers, respectively. S-nitrosylated, leading to inactivation of the acyltransferase activity.

It localises to the cytoplasm. The protein resides in the cytosol. The protein localises to the nucleus. Its subcellular location is the chromosome. It is found in the secreted. It localises to the extracellular space. The protein resides in the extracellular matrix. The protein localises to the cell membrane. Its subcellular location is the mitochondrion. The enzyme catalyses L-glutaminyl-[protein] + L-lysyl-[protein] = [protein]-L-lysyl-N(6)-5-L-glutamyl-[protein] + NH4(+). The catalysed reaction is L-glutaminyl-[protein] + serotonin = 5-serotonyl-L-glutamyl-[protein] + NH4(+). It carries out the reaction L-glutaminyl-[protein] + dopamine = 5-dopaminyl-L-glutamyl-[protein] + NH4(+). It catalyses the reaction L-glutaminyl-[protein] + histamine = 5-histaminyl-L-glutamyl-[protein] + NH4(+). The enzyme catalyses L-glutaminyl-[protein] + (R)-noradrenaline = 5-(R)-noradrenalinyl-L-glutamyl-[protein] + NH4(+). The catalysed reaction is L-glutaminyl-[protein] + H2O = L-glutamyl-[protein] + NH4(+). With respect to regulation, acyltransferase activity is regulated by the binding of GTP and Ca(2+): inactivated by GTP, which stabilizes its closed structure, thereby obstructing the accessibility of substrates to the active sites. In contrast, Ca(2+) acts as a cofactor by inducing conformational change to the active open form. In absence of Ca(2+), Mg(2+) may bind Ca(2+)-binding sites, promoting GTP-binding and subsequent inhibition of the acyltransferase activity. Extracellularly reduced and activated by CLIC3. Its function is as follows. Calcium-dependent acyltransferase that catalyzes the formation of covalent bonds between peptide-bound glutamine and various primary amines, such as gamma-amino group of peptide-bound lysine, or mono- and polyamines, thereby producing cross-linked or aminated proteins, respectively. Involved in many biological processes, such as bone development, angiogenesis, wound healing, cellular differentiation, chromatin modification and apoptosis. Acts as a protein-glutamine gamma-glutamyltransferase by mediating the cross-linking of proteins, such as ACO2, HSPB6, FN1, HMGB1, RAP1GDS1, SLC25A4/ANT1, SPP1 and WDR54. Under physiological conditions, the protein cross-linking activity is inhibited by GTP; inhibition is relieved by Ca(2+) in response to various stresses. When secreted, catalyzes cross-linking of proteins of the extracellular matrix, such as FN1 and SPP1 resulting in the formation of scaffolds. Plays a key role during apoptosis, both by (1) promoting the cross-linking of cytoskeletal proteins resulting in condensation of the cytoplasm, and by (2) mediating cross-linking proteins of the extracellular matrix, resulting in the irreversible formation of scaffolds that stabilize the integrity of the dying cells before their clearance by phagocytosis, thereby preventing the leakage of harmful intracellular components. In addition to protein cross-linking, can use different monoamine substrates to catalyze a vast array of protein post-translational modifications: mediates aminylation of serotonin, dopamine, noradrenaline or histamine into glutamine residues of target proteins to generate protein serotonylation, dopaminylation, noradrenalinylation or histaminylation, respectively. Mediates protein serotonylation of small GTPases during activation and aggregation of platelets, leading to constitutive activation of these GTPases. Plays a key role in chromatin organization by mediating serotonylation and dopaminylation of histone H3. Catalyzes serotonylation of 'Gln-5' of histone H3 (H3Q5ser) during serotonergic neuron differentiation, thereby facilitating transcription. Acts as a mediator of neurotransmission-independent role of nuclear dopamine in ventral tegmental area (VTA) neurons: catalyzes dopaminylation of 'Gln-5' of histone H3 (H3Q5dop), thereby regulating relapse-related transcriptional plasticity in the reward system. Regulates vein remodeling by mediating serotonylation and subsequent inactivation of ATP2A2/SERCA2. Also acts as a protein deamidase by mediating the side chain deamidation of specific glutamine residues of proteins to glutamate. Catalyzes specific deamidation of protein gliadin, a component of wheat gluten in the diet. May also act as an isopeptidase cleaving the previously formed cross-links. Also able to participate in signaling pathways independently of its acyltransferase activity: acts as a signal transducer in alpha-1 adrenergic receptor-mediated stimulation of phospholipase C-delta (PLCD) activity and is required for coupling alpha-1 adrenergic agonists to the stimulation of phosphoinositide lipid metabolism. The polypeptide is Protein-glutamine gamma-glutamyltransferase 2 (Cavia cutleri (Guinea pig)).